The following is a 125-amino-acid chain: Nuclear envelope phosphatase-regulatory subunit 1 (125 aa).

Met1 carries the N-acetylmethionine modification. Helical transmembrane passes span 33–53 (MLLIVVSVCTATGAWNWLIDP) and 65–85 (WNHPFFTISCITLIGLFFAGI).

Belongs to the CNEP1R1 family. Interacts with CTDNEP1; the complex dephosphorylates LPIN1 and LPIN2.

The protein resides in the nucleus membrane. It localises to the cytoplasm. Forms with the serine/threonine protein phosphatase CTDNEP1 an active complex which dephosphorylates and may activate LPIN1 and LPIN2. LPIN1 and LPIN2 are phosphatidate phosphatases that catalyze the conversion of phosphatidic acid to diacylglycerol and control the metabolism of fatty acids at different levels. May indirectly modulate the lipid composition of nuclear and/or endoplasmic reticulum membranes and be required for proper nuclear membrane morphology and/or dynamics. May also indirectly regulate the production of lipid droplets and triacylglycerol. In Bos taurus (Bovine), this protein is Nuclear envelope phosphatase-regulatory subunit 1 (CNEP1R1).